Here is a 209-residue protein sequence, read N- to C-terminus: Imidazole glycerol phosphate synthase subunit HisH (209 aa).

The Glutamine amidotransferase type-1 domain maps to 1-205 (MIAIIDYGMG…KGVVETWKSS (205 aa)). Cysteine 79 serves as the catalytic Nucleophile. Catalysis depends on residues histidine 180 and glutamate 182.

Heterodimer of HisH and HisF.

The protein localises to the cytoplasm. It catalyses the reaction 5-[(5-phospho-1-deoxy-D-ribulos-1-ylimino)methylamino]-1-(5-phospho-beta-D-ribosyl)imidazole-4-carboxamide + L-glutamine = D-erythro-1-(imidazol-4-yl)glycerol 3-phosphate + 5-amino-1-(5-phospho-beta-D-ribosyl)imidazole-4-carboxamide + L-glutamate + H(+). The catalysed reaction is L-glutamine + H2O = L-glutamate + NH4(+). It functions in the pathway amino-acid biosynthesis; L-histidine biosynthesis; L-histidine from 5-phospho-alpha-D-ribose 1-diphosphate: step 5/9. In terms of biological role, IGPS catalyzes the conversion of PRFAR and glutamine to IGP, AICAR and glutamate. The HisH subunit catalyzes the hydrolysis of glutamine to glutamate and ammonia as part of the synthesis of IGP and AICAR. The resulting ammonia molecule is channeled to the active site of HisF. The polypeptide is Imidazole glycerol phosphate synthase subunit HisH (Bacillus thuringiensis (strain Al Hakam)).